A 360-amino-acid chain; its full sequence is Phospho-N-acetylmuramoyl-pentapeptide-transferase (360 aa).

Topologically, residues 1–25 (MLVWLAEHLVKYYSGFNVFSYLTFR) are periplasmic. The helical transmembrane segment at 26-46 (AIVSLLTALFISLWMGPRMIA) threads the bilayer. At 47-71 (RLQKLSFGQVVRNDGPESHFSKRGT) the chain is on the cytoplasmic side. Residues 72-92 (PTMGGIMILTAIVISVLLWAY) form a helical membrane-spanning segment. Position 93 (proline 93) is a topological domain, periplasmic. The chain crosses the membrane as a helical span at residues 94-114 (SNPYVWCVLVVLIGYGIIGFV). The Cytoplasmic segment spans residues 115 to 131 (DDYHKVVRKDTKGLIAR). A helical transmembrane segment spans residues 132–152 (WKYFWMSVIALGVAFALYLVG). The Periplasmic segment spans residues 153-167 (KDTPATQLVVPFFKD). A helical membrane pass occupies residues 168–188 (VMPQLGLFYILLSYFVIVGTG). The Cytoplasmic segment spans residues 189 to 198 (NAVNLTDGLD). A helical membrane pass occupies residues 199–219 (GLAIMPTVFVAAGFALVAWAT). The Periplasmic segment spans residues 220-235 (GNMNFANYLHIPYLRY). A helical transmembrane segment spans residues 236–256 (AGELVIVCTAIVGAGLGFLWF). At 257–262 (NTYPAQ) the chain is on the cytoplasmic side. A helical membrane pass occupies residues 263 to 283 (VFMGDVGSLALGGALGIIAVL). At 284–287 (LRQE) the chain is on the periplasmic side. Residues 288 to 308 (FLLVIMGGVFVVETLSVILQV) traverse the membrane as a helical segment. The Cytoplasmic portion of the chain corresponds to 309-337 (GSFKLRGQRIFRMAPIHHHYELKGWPEPR). Residues 338–358 (VIVRFWIISLMLVLIGLATLK) form a helical membrane-spanning segment. Topologically, residues 359–360 (VR) are periplasmic.

It belongs to the glycosyltransferase 4 family. MraY subfamily. It depends on Mg(2+) as a cofactor.

Its subcellular location is the cell inner membrane. It catalyses the reaction UDP-N-acetyl-alpha-D-muramoyl-L-alanyl-gamma-D-glutamyl-meso-2,6-diaminopimeloyl-D-alanyl-D-alanine + di-trans,octa-cis-undecaprenyl phosphate = di-trans,octa-cis-undecaprenyl diphospho-N-acetyl-alpha-D-muramoyl-L-alanyl-D-glutamyl-meso-2,6-diaminopimeloyl-D-alanyl-D-alanine + UMP. The protein operates within cell wall biogenesis; peptidoglycan biosynthesis. Catalyzes the initial step of the lipid cycle reactions in the biosynthesis of the cell wall peptidoglycan: transfers peptidoglycan precursor phospho-MurNAc-pentapeptide from UDP-MurNAc-pentapeptide onto the lipid carrier undecaprenyl phosphate, yielding undecaprenyl-pyrophosphoryl-MurNAc-pentapeptide, known as lipid I. This chain is Phospho-N-acetylmuramoyl-pentapeptide-transferase, found in Salmonella paratyphi A (strain ATCC 9150 / SARB42).